A 366-amino-acid polypeptide reads, in one-letter code: MSFTRKKGFYKQDVNKTAWELPKTYVSLTHIGSGAYGSVCSAIDKRSGEKVAIKKLSRPFQSEIFAKRAYRELLLLKHMQHENVIGLLDVFTPASSLRNFHDFYLVMPFMQTDLQKIMGMEFSEDKIQYLVYQMLKGLKYIHSAGVVHRDLKPGNLAVNEDCELKILDFGLARHTDVEMTGYVVTRWYRAPEVILSWMHYNQTVDIWSVGCIMAEMLTGKTLFKGKDYLDQLTQILKVTGVPGAEFVQKLNDKAAKSYIQSLPQSPKKDFSQLFPRASPQATDLLEKMLELDVDKRLTASQALAHPFFEPFRDPEEETEAQQPLEDSLEREKLIVDEWKQHIYKEIVNFSPIARKDSRRRSGMKLQ.

A Protein kinase domain is found at 25 to 308; sequence YVSLTHIGSG…ASQALAHPFF (284 aa). 31 to 39 lines the ATP pocket; that stretch reads IGSGAYGSV. Position 47 is a phosphoserine (Ser47). Residue Lys54 coordinates ATP. Residue Asp150 is the Proton acceptor of the active site. Thr180 is subject to Phosphothreonine; by MAP2K3, MAP2K4, MAP2K6 and MAP2K7. The TXY signature appears at 180–182; the sequence is TGY. Tyr182 bears the Phosphotyrosine; by MAP2K3, MAP2K4, MAP2K6 and MAP2K7 mark. Ser350 bears the Phosphoserine mark.

Belongs to the protein kinase superfamily. CMGC Ser/Thr protein kinase family. MAP kinase subfamily. As to quaternary structure, interacts with MAPK8IP2. The cofactor is Mg(2+). Post-translationally, dually phosphorylated on Thr-180 and Tyr-182 by MAP2K3/MKK3, MAP2K4/MKK4, MAP2K6/MKK6 and MAP2K7/MKK7, which activates the enzyme. Dephosphorylated by dual specificity phosphatase DUSP1.

The catalysed reaction is L-seryl-[protein] + ATP = O-phospho-L-seryl-[protein] + ADP + H(+). It catalyses the reaction L-threonyl-[protein] + ATP = O-phospho-L-threonyl-[protein] + ADP + H(+). With respect to regulation, activated by phosphorylation on threonine and tyrosine by dual specificity kinases, MAP2K3/MKK3 MAP2K6/MKK6, MAP2K4/MKK4 and MAP2K7/MKK7. Activation by ultraviolet radiation, hyperosmotic shock, anisomycin or by TNF-alpha is mediated by MAP2K3/MKK3. Inhibited by dual specificity phosphatase DUSP1. Functionally, serine/threonine kinase which acts as an essential component of the MAP kinase signal transduction pathway. MAPK13 is one of the four p38 MAPKs which play an important role in the cascades of cellular responses evoked by extracellular stimuli such as pro-inflammatory cytokines or physical stress leading to direct activation of transcription factors such as ELK1 and ATF2. Accordingly, p38 MAPKs phosphorylate a broad range of proteins and it has been estimated that they may have approximately 200 to 300 substrates each. MAPK13 is one of the less studied p38 MAPK isoforms. Some of the targets are downstream kinases such as MAPKAPK2, which are activated through phosphorylation and further phosphorylate additional targets. Plays a role in the regulation of protein translation by phosphorylating and inactivating EEF2K. Involved in cytoskeletal remodeling through phosphorylation of MAPT and STMN1. Mediates UV irradiation induced up-regulation of the gene expression of CXCL14. Plays an important role in the regulation of epidermal keratinocyte differentiation, apoptosis and skin tumor development. Phosphorylates the transcriptional activator MYB in response to stress which leads to rapid MYB degradation via a proteasome-dependent pathway. MAPK13 also phosphorylates and down-regulates PRKD1 during regulation of insulin secretion in pancreatic beta cells. The polypeptide is Mitogen-activated protein kinase 13 (MAPK13) (Bos taurus (Bovine)).